A 253-amino-acid polypeptide reads, in one-letter code: Methionine aminopeptidase A (253 aa).

Substrate is bound at residue His80. A divalent metal cation-binding residues include Asp98, Asp109, and His172. His179 contributes to the substrate binding site. Residues Glu205 and Glu236 each contribute to the a divalent metal cation site.

Belongs to the peptidase M24A family. Methionine aminopeptidase type 1 subfamily. Monomer. Co(2+) is required as a cofactor. Zn(2+) serves as cofactor. Requires Mn(2+) as cofactor. The cofactor is Fe(2+).

It catalyses the reaction Release of N-terminal amino acids, preferentially methionine, from peptides and arylamides.. Functionally, removes the N-terminal methionine from nascent proteins. The N-terminal methionine is often cleaved when the second residue in the primary sequence is small and uncharged (Met-Ala-, Cys, Gly, Pro, Ser, Thr, or Val). Requires deformylation of the N(alpha)-formylated initiator methionine before it can be hydrolyzed. The chain is Methionine aminopeptidase A from Synechocystis sp. (strain ATCC 27184 / PCC 6803 / Kazusa).